The chain runs to 989 residues: MNMKKKEKHAIRKKSIGVASVLVGTLIGFGLLSSKEADASENSVTQSDSASNESKSNDSSSVSAAPKTDDTNVSDTKTSSNTNNGETSVAQNPAQQETTQSSSTNATTEETPVTGEATTTTTNQANTPATTQSSNTNAEELVNQTSNETTSNDTNTVSSVNSPQNSTNAENVSTTQDTSTEATPSNNESAPQNTDASNKDVVSQAVNPSTPRMRAFSLAAVAADAPAAGTDITNQLTDVKVTIDSGTTVYPHQAGYVKLNYGFSVPNSAVKGDTFKITVPKELNLNGVTSTAKVPPIMAGDQVLANGVIDSDGNVIYTFTDYVDNKENVTANITMPAYIDPENVTKTGNVTLTTGIGTNTASKTVLIDYEKYGQFHNLSIKGTIDQIDKTNNTYRQTIYVNPSGDNVVLPALTGNLIPNTKSNALIDAKNTDIKVYRVDNANDLSESYYVNPSDFEDVTNQVRISFPNANQYKVEFPTDDDQITTPYIVVVNGHIDPASTGDLALRSTFYGYDSNFIWRSMSWDNEVAFNNGSGSGDGIDKPVVPEQPDEPGEIEPIPEDSDSDPGSDSGSDSNSDSGSDSGSDSTSDSGSDSASDSDSASDSDSASDSDSASDSDSASDSDSASDSDSASDSDSASDSDSASDSDSASDSDSASDSDSASDSDSASDSDSDSDSDSDSDSDSDSDSDSDSDSDSDSDSDSDSDSDSDSDSDSDSDSDSDSDSDSDSDSDSDSDSDSDSDSDSDSDSDSDSDSDSDSDSDSDSDSDSDSDSDSDSDSDSDSDSDSDSDSDSDSDSDSDSDSDSDSDSDSDSDSDSDSDSDSASDSDSDSDSESDSDSDSDSDSDSDSDSDSDSDSESDSDSDSDSDSESDSDSDSDSDSDSASDSDSGSDSDSSSDSDSDSTSDTGSDNDSDSDSNSDSESGSNNNVVPPNSPKNGTNASNKNEAKDSKEPLPDTGSEDEANTSLIWGLLASLGSLLLFRRKKENKDKK.

The signal sequence occupies residues 1 to 39 (MNMKKKEKHAIRKKSIGVASVLVGTLIGFGLLSSKEADA). Positions 9–20 (HAIRKKSIGVAS) match the YSIRK-G/S signaling motif motif. 2 disordered regions span residues 34–205 (SKEA…VSQA) and 529–960 (FNNG…SEDE). Residues 40 to 542 (SENSVTQSDS…SGSGDGIDKP (503 aa)) are ligand binding A region. The span at 47–65 (SDSASNESKSNDSSSVSAA) shows a compositional bias: low complexity. A compositionally biased stretch (polar residues) spans 71 to 105 (TNVSDTKTSSNTNNGETSVAQNPAQQETTQSSSTN). Low complexity-rich tracts occupy residues 106–132 (ATTE…ATTQ) and 143–162 (NQTS…SVNS). A compositionally biased stretch (polar residues) spans 163–205 (PQNSTNAENVSTTQDTSTEATPSNNESAPQNTDASNKDVVSQA). Positions 547–565 (QPDEPGEIEPIPEDSDSDP) are enriched in acidic residues. Over residues 566–598 (GSDSGSDSNSDSGSDSGSDSTSDSGSDSASDSD) the composition is skewed to low complexity. Acidic residues predominate over residues 599-917 (SASDSDSASD…DNDSDSDSNS (319 aa)). Positions 918-936 (DSESGSNNNVVPPNSPKNG) are enriched in low complexity. Residues 943-952 (NEAKDSKEPL) show a composition bias toward basic and acidic residues. The LPXTG sorting signal motif lies at 952-956 (LPDTG). Pentaglycyl murein peptidoglycan amidated threonine is present on Thr-955. Residues 956-989 (GSEDEANTSLIWGLLASLGSLLLFRRKKENKDKK) constitute a propeptide, removed by sortase.

Belongs to the serine-aspartate repeat-containing protein (SDr) family.

The protein localises to the secreted. The protein resides in the cell wall. Cell surface-associated protein implicated in virulence. Promotes bacterial attachment exclusively to the gamma-chain of human fibrinogen. Induces formation of bacterial clumps, which diminish the ability of group IIA phospholipase A2 to cause bacterial phospholipid hydrolysis and killing. Significantly decreases macrophage phagocytosis possibly thanks to the clumps, clumped bacteria being too large to be phagocytosed. Dominant factor responsible for human platelet aggregation, which may be an important mechanism for initiating infective endocarditis. The chain is Clumping factor A (clfA) from Staphylococcus aureus (strain N315).